The sequence spans 233 residues: Antiholin-like protein LrgB (233 aa).

The next 7 membrane-spanning stretches (helical) occupy residues 7 to 27, 33 to 53, 63 to 83, 97 to 117, 124 to 144, 152 to 172, and 212 to 232; these read INTP…ATFL, GFFL…FLKL, IGGD…AIPL, ILGG…LIAE, GIIA…PVSA, LTSL…SKLI, and ISLV…ATLL.

It belongs to the CidB/LrgB family. LrgB subfamily.

Its subcellular location is the cell membrane. Inhibits the expression or activity of extracellular murein hydrolases by interacting, possibly with LrgA, with the holin-like proteins CidA and/or CidB. The LrgAB and CidAB proteins may affect the proton motive force of the membrane. May be involved in programmed cell death (PCD), possibly triggering PCD in response to antibiotics and environmental stresses. The polypeptide is Antiholin-like protein LrgB (Staphylococcus saprophyticus subsp. saprophyticus (strain ATCC 15305 / DSM 20229 / NCIMB 8711 / NCTC 7292 / S-41)).